A 348-amino-acid chain; its full sequence is MLKKTTWIKLPRNVLVGHDVIGDLAAAIEELYLDGRPLIVTSPTPDQLIGNRVRSQFADPQTVSVDHASFDAVEAVIDTAKATDAGYLIGLGGGKPIDTAKMASDRLGCGFVSVPTAASHDGIVSGRSSIPEGDTRHSVAADPPLAVVADTAVLAEAPWELTTAGCADIISNYTAVKDWQLAHRLQDVEYSEYAGALSQMTAEMLVDNSDAIKQGFEESAWLVAKALVSSGVAMSIAGSSRPASGAEHLISHQLDRLVPDAALHGHQVGVASIVTAYLHTGENGEWEDIRAALADVGAPTTATELGIDEEIFIQAITSAHAIRDRHTILGNGVSEAAAREAAVFTDVC.

NAD(+)-binding positions include 94-98 (GKPID) and 116-119 (TAAS). Substrate is bound at residue D121. S125 is a binding site for NAD(+). D168 contributes to the substrate binding site. Residues D168 and H248 each coordinate Zn(2+). H252 lines the substrate pocket. H264 lines the Zn(2+) pocket.

Belongs to the glycerol-1-phosphate dehydrogenase family. Zn(2+) is required as a cofactor.

The protein resides in the cytoplasm. It carries out the reaction sn-glycerol 1-phosphate + NAD(+) = dihydroxyacetone phosphate + NADH + H(+). It catalyses the reaction sn-glycerol 1-phosphate + NADP(+) = dihydroxyacetone phosphate + NADPH + H(+). Its pathway is membrane lipid metabolism; glycerophospholipid metabolism. Its function is as follows. Catalyzes the NAD(P)H-dependent reduction of dihydroxyacetonephosphate (DHAP or glycerone phosphate) to glycerol 1-phosphate (G1P). The G1P thus generated is used as the glycerophosphate backbone of phospholipids in the cellular membranes of Archaea. The polypeptide is Glycerol-1-phosphate dehydrogenase [NAD(P)+] (Haloquadratum walsbyi (strain DSM 16790 / HBSQ001)).